The following is a 370-amino-acid chain: Cyclin-A3-4 (370 aa).

This sequence belongs to the cyclin family. Cyclin AB subfamily. In terms of assembly, interacts with FZR2/CCS52A1, FZR1/CCS52A2 and FZR3/CCS52B.

This chain is Cyclin-A3-4 (CYCA3-4), found in Arabidopsis thaliana (Mouse-ear cress).